The sequence spans 129 residues: Putative transmembrane protein 10 (129 aa).

A run of 3 helical transmembrane segments spans residues 3–23 (NFSY…AFAG), 27–47 (LLVG…LSSL), and 85–105 (SSVL…FFVF).

It is found in the host membrane. The polypeptide is Putative transmembrane protein 10 (SIFV0010) (Sulfolobus islandicus filamentous virus (isolate Iceland/Hveragerdi) (SIFV)).